We begin with the raw amino-acid sequence, 4454 residues long: E3 ubiquitin-protein ligase HUWE1 (4454 aa).

The disordered stretch occupies residues 521–575 (RASSSNSSTSISGPGPGPGPGPGPGPGPGPGPGPGPGLGPSLGPGPGPGPRPGVQ). A compositionally biased stretch (low complexity) spans 523 to 533 (SSSNSSTSISG). The segment covering 535–571 (GPGPGPGPGPGPGPGPGPGPGPGLGPSLGPGPGPGPR) has biased composition (pro residues). A phosphoserine mark is found at S724 and S725. Disordered regions lie at residues 781–834 (QKAD…VVGT), 1054–1077 (DEKAGTTQGGKRSDGEQDGTAGSM), and 1094–1114 (TLAPMETDEPSSSDSKGKSKI). Residues 801–811 (ASSEDEEEEEV) show a composition bias toward acidic residues. Over residues 813 to 832 (AMQSFNSAQQNETEPNQQVV) the composition is skewed to polar residues. S816 is modified (phosphoserine). S1160 is modified (phosphoserine). Over residues 1367 to 1378 (LSKEKEGSRGEE) the composition is skewed to basic and acidic residues. A disordered region spans residues 1367-1396 (LSKEKEGSRGEEEAGQEEGGSRREPQVNQQ). A UBA domain is found at 1392 to 1431 (QVNQQQLQQLMDMGFTREHAMEALLNTSTMEQATEYLLTH). Residues S1444, S1446, S1458, and S1471 each carry the phosphoserine modification. The 20-residue stretch at 1446–1465 (SEEDQMMRAIAMSLGQDIPM) folds into the UIM domain. Residues 1472-1491 (PEEVACRKEEEERKAREKQE) are disordered. Positions 1679 to 1756 (RAQMTKYLQS…ETGNRRPVML (78 aa)) constitute a WWE domain. Residues 1766-1802 (KNSKSSNGQELEKTLEESKETDIKRKENKGNDIPLAL) form a disordered region. Positions 1775–1795 (ELEKTLEESKETDIKRKENKG) are enriched in basic and acidic residues. Residue S1983 is modified to Phosphoserine. Disordered stretches follow at residues 2095-2142 (APAE…SKPL), 2339-2420 (SLFG…QEMQ), and 2433-2556 (LERD…ASPL). Residues 2097-2112 (AETSTTGTSQGEGAST) show a composition bias toward low complexity. Residue T2112 is modified to Phosphothreonine. Basic and acidic residues predominate over residues 2114 to 2134 (EETREGKKDKEGDRTSEEGKQ). The segment covering 2339-2368 (SLFGSKSASSKSKSEQDAQGASQDSSSHQQ) has biased composition (low complexity). At S2343 the chain carries Phosphoserine. K2344 carries the N6-acetyllysine modification. 2 stretches are compositionally biased toward acidic residues: residues 2372 to 2383 (EPGEAEVQEEDH) and 2391 to 2402 (ADGDIMDGEAET). Residues S2439, S2442, and S2468 each carry the phosphoserine modification. A compositionally biased stretch (polar residues) spans 2465–2475 (SNLSQASTLQA). The segment covering 2485-2549 (DPEDEEEHTQ…SEMELDEDYP (65 aa)) has biased composition (acidic residues). S2604, S2609, and S2612 each carry phosphoserine. Position 2631 is a phosphothreonine (T2631). A phosphoserine mark is found at S2661, S2672, and S2696. The segment covering 2781 to 2793 (IIDKGKEDKENRD) has biased composition (basic and acidic residues). 2 disordered regions span residues 2781–3047 (IIDK…GVDP) and 3113–3136 (QQRAEQQRRELAQNASSDTPMDPV). Residues 2794 to 2813 (QSAQCTVSKTNDSTEQNVSD) are compositionally biased toward polar residues. Over residues 2815–2849 (TPMPDSYPTTPSSTDAPTSESKETLGTLQPSQQQP) the composition is skewed to low complexity. A Phosphothreonine modification is found at T2828. Polar residues-rich tracts occupy residues 2895-2912 (AETTQMELSPAPTITSLS), 2924-2941 (AVSSQLEGSPMDTSSLAS), and 2954-2967 (AGSSEQPTAGSSTP). S2903, S2910, S2912, S2938, S2964, and S2965 each carry phosphoserine. The residue at position 2966 (T2966) is a Phosphothreonine. Residues 2990-3009 (PPEDSSPPASSESSSTRDSA) show a composition bias toward low complexity. Position 2995 is a phosphoserine (S2995). Phosphoserine is present on residues S3193, S3194, S3199, S3204, and S3212. At R3226 the chain carries Omega-N-methylarginine. Disordered stretches follow at residues 3320-3343 (PKLSTSEERGKKSSKSCASSSHEN), 3431-3458 (QRTKETNCESDRERGSKQACSPCSSQSS), 3482-3501 (GKNSVKSVPVSAGGEGETSL), 3548-3590 (SEVQ…TTPV), and 3615-3642 (TPTTATTTVSTSTTKGNKSPAKVGEGGS). The segment covering 3432 to 3446 (RTKETNCESDRERGS) has biased composition (basic and acidic residues). The span at 3447–3458 (KQACSPCSSQSS) shows a compositional bias: low complexity. Low complexity-rich tracts occupy residues 3552 to 3579 (TNSSNSGSSTAATSNTSTTTTTTTATAP) and 3615 to 3628 (TPTTATTTVSTSTT). Phosphoserine is present on residues S3633, S3740, S3830, S3835, S3837, and S3838. The tract at residues 3815-3836 (TRRANKKAKQTGRLGSSGLGSA) is disordered. The span at 3826 to 3836 (GRLGSSGLGSA) shows a compositional bias: low complexity. Disordered regions lie at residues 3859-3927 (EGQR…LPLL) and 3974-4028 (RESK…SSSL). Residues 3871-3880 (TSESSNQSET) are compositionally biased toward polar residues. A phosphoserine mark is found at S3887, S3895, and S3907. Residues 3894–3905 (PSPSAQDTQSIV) are compositionally biased toward polar residues. At T3910 the chain carries Phosphothreonine. 2 stretches are compositionally biased toward basic and acidic residues: residues 3913–3922 (GEKEKEERPP) and 3974–3995 (RESKPPVRDTRESQLAHIKDEP). Residues S3986 and S3999 each carry the phosphoserine modification. The segment covering 3996–4005 (PPLSPAPLTP) has biased composition (pro residues). T4004 and T4007 each carry phosphothreonine. Polar residues predominate over residues 4018-4028 (EPSSMHISSSL). Positions 4118–4454 (SPEEMKNRLY…QECSEGFGLA (337 aa)) constitute an HECT domain. Position 4351 is a phosphotyrosine (Y4351). C4421 serves as the catalytic Glycyl thioester intermediate.

The protein belongs to the UPL family. TOM1/PTR1 subfamily. In terms of assembly, interacts with isoform p14ARF of CDKN2A which strongly inhibits HUWE1 ubiquitin ligase activity. Interacts with MYCN, POLB and CDC6. Interacts with isoform 2 of PA2G4. Interacts with NR1D1. Interacts with AMBRA1. Interacts with HAPSTR1. Interacts with HAPSTR2. In hepatocytes, interacts with PAQR3; the interaction promotes PPARA poylubiquitination and STUB1-mediated degradation. In terms of processing, phosphorylated on tyrosine, phosphorylation is probably required for its ability to inhibit TP53 transactivation. In terms of tissue distribution, widely expressed.

The protein resides in the cytoplasm. Its subcellular location is the nucleus. It is found in the mitochondrion. The catalysed reaction is S-ubiquitinyl-[E2 ubiquitin-conjugating enzyme]-L-cysteine + [acceptor protein]-L-lysine = [E2 ubiquitin-conjugating enzyme]-L-cysteine + N(6)-ubiquitinyl-[acceptor protein]-L-lysine.. It participates in protein modification; protein ubiquitination. In terms of biological role, E3 ubiquitin-protein ligase which mediates ubiquitination and subsequent proteasomal degradation of target proteins. Regulates apoptosis by catalyzing the polyubiquitination and degradation of MCL1. Mediates monoubiquitination of DNA polymerase beta (POLB) at 'Lys-41', 'Lys-61' and 'Lys-81', thereby playing a role in base-excision repair. Also ubiquitinates the p53/TP53 tumor suppressor and core histones including H1, H2A, H2B, H3 and H4. Ubiquitinates MFN2 to negatively regulate mitochondrial fusion in response to decreased stearoylation of TFRC. Ubiquitination of MFN2 also takes place following induction of mitophagy; AMBRA1 acts as a cofactor for HUWE1-mediated ubiquitination. Regulates neural differentiation and proliferation by catalyzing the polyubiquitination and degradation of MYCN. May regulate abundance of CDC6 after DNA damage by polyubiquitinating and targeting CDC6 to degradation. Mediates polyubiquitination of PA2G4. Acts in concert with MYCBP2 to regulate the circadian clock gene expression by promoting the lithium-induced ubiquination and degradation of NR1D1. Binds to an upstream initiator-like sequence in the preprodynorphin gene. Mediates HAPSTR1 degradation, but is also a required cofactor in the pathway by which HAPSTR1 governs stress signaling. Acts as a regulator of the JNK and NF-kappa-B signaling pathways by mediating assembly of heterotypic 'Lys-63'-/'Lys-48'-linked branched ubiquitin chains that are then recognized by TAB2: HUWE1 mediates branching of 'Lys-48'-linked chains of substrates initially modified with 'Lys-63'-linked conjugates by TRAF6. 'Lys-63'-/'Lys-48'-linked branched ubiquitin chains protect 'Lys-63'-linkages from CYLD deubiquitination. Ubiquitinates PPARA in hepatocytes. This Rattus norvegicus (Rat) protein is E3 ubiquitin-protein ligase HUWE1 (Huwe1).